Here is a 437-residue protein sequence, read N- to C-terminus: Mitochondrial distribution and morphology protein 12 (437 aa).

The SMP-LTD domain maps to 1-437 (MSIDINWRTA…VYPSFWTFLI (437 aa)). A compositionally biased stretch (acidic residues) spans 73-85 (DDDADTSDVSEDL). Disordered regions lie at residues 73–101 (DDDADTSDVSEDLLSEHSSQWDRTHSELN), 187–274 (SDSG…PPRM), and 354–384 (SEQQQESGGDDHRPRSGADSSAHTSQKRQGG). Basic and acidic residues predominate over residues 91–101 (SQWDRTHSELN). 2 stretches are compositionally biased toward polar residues: residues 215-240 (DTSNSTSRPSTANTLPSHLSESNNLN) and 371-381 (ADSSAHTSQKR).

This sequence belongs to the MDM12 family. Component of the ER-mitochondria encounter structure (ERMES) or MDM complex, composed of mmm1, mdm10, mdm12 and mdm34. A mmm1 homodimer associates with one molecule of mdm12 on each side in a pairwise head-to-tail manner, and the SMP-LTD domains of mmm1 and mdm12 generate a continuous hydrophobic tunnel for phospholipid trafficking.

Its subcellular location is the mitochondrion outer membrane. It localises to the endoplasmic reticulum membrane. In terms of biological role, component of the ERMES/MDM complex, which serves as a molecular tether to connect the endoplasmic reticulum (ER) and mitochondria. Components of this complex are involved in the control of mitochondrial shape and protein biogenesis, and function in nonvesicular lipid trafficking between the ER and mitochondria. Mdm12 is required for the interaction of the ER-resident membrane protein mmm1 and the outer mitochondrial membrane-resident beta-barrel protein mdm10. The mdm12-mmm1 subcomplex functions in the major beta-barrel assembly pathway that is responsible for biogenesis of all mitochondrial outer membrane beta-barrel proteins, and acts in a late step after the SAM complex. The mdm10-mdm12-mmm1 subcomplex further acts in the TOM40-specific pathway after the action of the mdm12-mmm1 complex. Essential for establishing and maintaining the structure of mitochondria and maintenance of mtDNA nucleoids. The polypeptide is Mitochondrial distribution and morphology protein 12 (Aspergillus clavatus (strain ATCC 1007 / CBS 513.65 / DSM 816 / NCTC 3887 / NRRL 1 / QM 1276 / 107)).